The chain runs to 362 residues: Cationic peroxidase SPC4 (362 aa).

Positions 1 to 31 (MSRAPTLAAAAAVAAVVLICSSSTATAADGN) are cleaved as a signal peptide. Cystine bridges form between Cys50-Cys131, Cys83-Cys88, Cys138-Cys333, and Cys218-Cys245. Catalysis depends on His81, which acts as the Proton acceptor. Ca(2+) is bound by residues Asp82, Val85, Gly87, Asp89, and Ser91. Residue Asn109 is glycosylated (N-linked (GlcNAc...) asparagine). Residue Thr111 participates in (indol-3-yl)acetate binding. A substrate-binding site is contributed by Pro181. His211 contributes to the heme b binding site. Thr212 is a Ca(2+) binding site. N-linked (GlcNAc...) asparagine glycosylation occurs at Asn234. Ca(2+)-binding residues include Asp257, Thr260, Ala263, and Asp265. Asn332 carries an N-linked (GlcNAc...) asparagine glycan.

Belongs to the peroxidase family. Classical plant (class III) peroxidase subfamily. In terms of assembly, monomer. Heme b serves as cofactor. The cofactor is Ca(2+). Post-translationally, the proportions of glycoforms I and II are 35% and 65% respectively. As to expression, present in germinated and ungerminated grain, seedlings, and leaves and stem of the mature plant.

The protein localises to the secreted. It carries out the reaction 2 a phenolic donor + H2O2 = 2 a phenolic radical donor + 2 H2O. Removal of H(2)O(2), oxidation of toxic reductants, biosynthesis and degradation of lignin, suberization, auxin catabolism, response to environmental stresses such as wounding, pathogen attack and oxidative stress. These functions might be dependent on each isozyme/isoform in each plant tissue. Has a high preference for hydroxycinnamates as substrates. Substrate preference is ferulic acid &gt; p-coumaric acid &gt; N-acetyl tyrosine methyl ester &gt; N-acetyl-tyrosine &gt; tyrosine &gt; catechol &gt; Gly-Tyr-Gly. May be involved in the formation of diferulate linkages in the plant cell wall. The polypeptide is Cationic peroxidase SPC4 (Sorghum bicolor (Sorghum)).